Consider the following 373-residue polypeptide: Citrate synthase (373 aa).

Catalysis depends on residues His262 and Asp314.

Belongs to the citrate synthase family. In terms of assembly, homohexamer.

It carries out the reaction oxaloacetate + acetyl-CoA + H2O = citrate + CoA + H(+). The protein operates within carbohydrate metabolism; tricarboxylic acid cycle; isocitrate from oxaloacetate: step 1/2. This chain is Citrate synthase (ctsA), found in Heyndrickxia coagulans (Weizmannia coagulans).